A 555-amino-acid chain; its full sequence is Cilia- and flagella-associated protein 184 (555 aa).

Over residues 1 to 12 the composition is skewed to basic and acidic residues; that stretch reads MDVSSEHTKDPG. A disordered region spans residues 1 to 202; the sequence is MDVSSEHTKD…KSQEEGKRLY (202 aa). Composition is skewed to acidic residues over residues 41–54 and 95–105; these read GELE…EEEQ and PEPEEPAEVGA. Residues 106–117 show a composition bias toward low complexity; the sequence is EEPAQPEPGAGP. The segment covering 118-131 has biased composition (acidic residues); that stretch reads EELEAEAGAEELEQ. Positions 174 to 202 are enriched in basic and acidic residues; sequence ETQRDGAESKERDGEGRPAKSQEEGKRLY. 2 coiled-coil regions span residues 305–441 and 505–531; these read YHQE…NSVQ and DSLL…LKRH.

The protein belongs to the CFAP184 family. As to quaternary structure, forms a complex with CFAP263; the interaction is required for functional activity in cilia.

It localises to the cell projection. It is found in the cilium. The protein resides in the cytoplasm. Its subcellular location is the cytoskeleton. The protein localises to the microtubule organizing center. It localises to the centrosome. In complex with CFAP263, acts as a regulator of ciliary beating that connects radial spoke 3 (RS3) to the inner dynein arm (IDA) and the nexin-dynein regulatory complex (N-DRC). The complex is positioned parallel to N-DRC and forms a connection between the arch at the base of RS3, the IDA tail and N-DRC. This is Cilia- and flagella-associated protein 184 from Homo sapiens (Human).